The primary structure comprises 275 residues: Bifunctional protein FolD (275 aa).

NADP(+)-binding positions include 161–163 (GRS), serine 186, and threonine 227.

Belongs to the tetrahydrofolate dehydrogenase/cyclohydrolase family. Homodimer.

The catalysed reaction is (6R)-5,10-methylene-5,6,7,8-tetrahydrofolate + NADP(+) = (6R)-5,10-methenyltetrahydrofolate + NADPH. The enzyme catalyses (6R)-5,10-methenyltetrahydrofolate + H2O = (6R)-10-formyltetrahydrofolate + H(+). It functions in the pathway one-carbon metabolism; tetrahydrofolate interconversion. Functionally, catalyzes the oxidation of 5,10-methylenetetrahydrofolate to 5,10-methenyltetrahydrofolate and then the hydrolysis of 5,10-methenyltetrahydrofolate to 10-formyltetrahydrofolate. In Parafrankia sp. (strain EAN1pec), this protein is Bifunctional protein FolD.